The primary structure comprises 242 residues: Putative ABC transporter ATP-binding protein TTE0246 (242 aa).

The 238-residue stretch at 5–242 (FELKNVSYFY…EKLLLKANLI (238 aa)) folds into the ABC transporter domain. Position 38 to 45 (38 to 45 (GANGSGKS)) interacts with ATP.

The protein belongs to the ABC transporter superfamily.

Its subcellular location is the cell membrane. Functionally, probably part of an ABC transporter complex. Responsible for energy coupling to the transport system. The chain is Putative ABC transporter ATP-binding protein TTE0246 from Caldanaerobacter subterraneus subsp. tengcongensis (strain DSM 15242 / JCM 11007 / NBRC 100824 / MB4) (Thermoanaerobacter tengcongensis).